Here is a 107-residue protein sequence, read N- to C-terminus: Nitrogenase-stabilizing/protective protein NifW (107 aa).

The protein belongs to the NifW family. As to quaternary structure, homotrimer; associates with NifD.

Functionally, may protect the nitrogenase Fe-Mo protein from oxidative damage. The protein is Nitrogenase-stabilizing/protective protein NifW of Gloeothece citriformis (strain PCC 7424) (Cyanothece sp. (strain PCC 7424)).